Consider the following 269-residue polypeptide: 3-methyl-2-oxobutanoate hydroxymethyltransferase (269 aa).

Mg(2+) contacts are provided by aspartate 42 and aspartate 81. 3-methyl-2-oxobutanoate contacts are provided by residues 42 to 43, aspartate 81, and lysine 111; that span reads DS. Glutamate 113 lines the Mg(2+) pocket. Residue glutamate 179 is the Proton acceptor of the active site. Residues 250-269 are disordered; that stretch reads SGEFPRESHSHTEDELDDLY. Over residues 252–262 the composition is skewed to basic and acidic residues; the sequence is EFPRESHSHTE.

It belongs to the PanB family. Homodecamer; pentamer of dimers. Requires Mg(2+) as cofactor.

The protein resides in the cytoplasm. It carries out the reaction 3-methyl-2-oxobutanoate + (6R)-5,10-methylene-5,6,7,8-tetrahydrofolate + H2O = 2-dehydropantoate + (6S)-5,6,7,8-tetrahydrofolate. Its pathway is cofactor biosynthesis; coenzyme A biosynthesis. Functionally, catalyzes the reversible reaction in which hydroxymethyl group from 5,10-methylenetetrahydrofolate is transferred onto alpha-ketoisovalerate to form ketopantoate. The polypeptide is 3-methyl-2-oxobutanoate hydroxymethyltransferase (Haloarcula marismortui (strain ATCC 43049 / DSM 3752 / JCM 8966 / VKM B-1809) (Halobacterium marismortui)).